A 206-amino-acid chain; its full sequence is MKAKREALLSLFQAIKENKVDEDIVELLLLINSIKGVYTTSSCSGRIGIIEEPSLGAKPLSRWLIKVHRPIKFEEAKKALKNAQKGLIFLKSQPPIFHVVTESLELARKIHEIGLSSGFKYTTYKVISRRYLVEINGTEYLTVPLGKDGKVFVTDEYLEFVIEIGNQMLMRGKSRLPRLREKFEELKEEVGEDPLFTTLSTEKLSL.

This sequence belongs to the TYW3 family.

It catalyses the reaction 4-demethyl-7-[(3S)-3-amino-3-carboxypropyl]wyosine(37) in tRNA(Phe) + S-adenosyl-L-methionine = 7-[(3S)-3-amino-3-carboxypropyl]wyosine(37) in tRNA(Phe) + S-adenosyl-L-homocysteine + H(+). Its function is as follows. S-adenosyl-L-methionine-dependent methyltransferase that acts as a component of the wyosine derivatives biosynthesis pathway. Probably methylates N-4 position of wybutosine-86 to produce wybutosine-72. The chain is tRNA(Phe) 7-((3-amino-3-carboxypropyl)-4-demethylwyosine(37)-N(4))-methyltransferase 2 from Pyrococcus furiosus (strain ATCC 43587 / DSM 3638 / JCM 8422 / Vc1).